Consider the following 1386-residue polypeptide: Roundabout homolog 3 (1386 aa).

A signal peptide spans 1-20 (MLRYLLKTLLQMNLFADSLA). Topologically, residues 21-891 (GDISNSSELL…VRLARVLREP (871 aa)) are extracellular. 4 N-linked (GlcNAc...) asparagine glycosylation sites follow: asparagine 25, asparagine 34, asparagine 41, and asparagine 53. 5 Ig-like C2-type domains span residues 64–160 (PRIV…ASLE), 166–253 (DDFR…AEVM), 258–342 (PSFL…GSLS), 347–440 (PQLV…ALLE), and 450–531 (PPVI…GEAT). Cysteine 85 and cysteine 143 form a disulfide bridge. Asparagine 156 carries N-linked (GlcNAc...) asparagine glycosylation. 3 disulfide bridges follow: cysteine 187–cysteine 236, cysteine 279–cysteine 326, and cysteine 368–cysteine 424. N-linked (GlcNAc...) asparagine glycosylation is found at asparagine 410, asparagine 459, and asparagine 503. An intrachain disulfide couples cysteine 472 to cysteine 521. Disordered regions lie at residues 541-563 (DWGVSPDPPTEPSSPPGAPSQPV) and 639-662 (EPSPVSEPVRTQDSSPSRPVEDPW). Residues 546 to 559 (PDPPTEPSSPPGAP) show a composition bias toward pro residues. Fibronectin type-III domains follow at residues 558–652 (APSQ…TQDS), 671–766 (VAVR…IPEE), and 771–869 (PPQG…SPPD). Residues asparagine 784, asparagine 813, and asparagine 820 are each glycosylated (N-linked (GlcNAc...) asparagine). The chain crosses the membrane as a helical span at residues 892–912 (AFLAGSGAACGALLLGLCAAL). Topologically, residues 913–1386 (YWRRKQRKEL…PGQKRREEPR (474 aa)) are cytoplasmic. 3 disordered regions span residues 965–989 (SWPHPSRSPSAQEPRGSCCPSNPDP), 1028–1310 (ELQT…AVPL), and 1327–1386 (SRPS…EEPR). Positions 1067-1083 (VKLLGKPVQMPSLNWPE) are enriched in low complexity. Acidic residues predominate over residues 1099-1112 (GPEEELEGSSEPEE). Residues 1158-1169 (PSPPDPPQPPTD) show a composition bias toward pro residues. Low complexity-rich tracts occupy residues 1178 to 1191 (RRVPLGPSSPLSVS) and 1202 to 1229 (PAGLGAGPAASPHLSPSPAPSTASSAPG). Phosphoserine is present on serine 1263. Residues 1294–1304 (LERERSGERKA) are compositionally biased toward basic and acidic residues. A compositionally biased stretch (polar residues) spans 1333 to 1344 (SRGQGTSTCSTA). The span at 1345-1361 (GSNSSRGSSSSRGSRGP) shows a compositional bias: low complexity.

Belongs to the immunoglobulin superfamily. ROBO family. Monomer. Interacts (via Fibronectin type-III 1 domain) with NELL2 (via the EGF domains) with a 3:3 stoichiometry; this interaction promotes oligomerization of ROBO3 resulting in the repulsion of commissural axons in the midline.

The protein localises to the membrane. Its function is as follows. Receptor involved in axon guidance during development. Acts as a multifunctional regulator of pathfinding that simultaneously mediates NELL2 repulsion, inhibits SLIT repulsion, and facilitates Netrin-1/NTN1 attraction. In spinal cord development plays a role in guiding commissural axons probably by preventing premature sensitivity to Slit proteins thus inhibiting Slit signaling through ROBO1/ROBO2. Binding OF NELL2 to the receptor ROBO3 promotes oligomerization of ROBO3, resulting in the repulsion of commissural axons in the midline. ROBO3 also indirectly boosts axon attraction to NTN1 without interacting with NTN1 itself. This is Roundabout homolog 3 from Homo sapiens (Human).